The sequence spans 383 residues: Neuropeptide Y receptor type 1 (383 aa).

Residues 1 to 44 (MNSTLSSQVENHSIYYNFSEKNSQFLAFENDDCHLPLAMIFTLA) are Extracellular-facing. Asn-2, Asn-11, and Asn-17 each carry an N-linked (GlcNAc...) asparagine glycan. A helical membrane pass occupies residues 45–65 (LAYGAVIILGVSGNLALIIII). At 66–76 (LKQKEMRNVTN) the chain is on the cytoplasmic side. Residues 77–97 (ILIVNLSFSDLLVAIMCLPFT) form a helical membrane-spanning segment. The Extracellular segment spans residues 98–116 (FVYTLMDHWVFGEVMCKLN). Cys-113 and Cys-198 form a disulfide bridge. The helical transmembrane segment at 117-137 (PFVQCVSITVSIFSLVLIAVE) threads the bilayer. The Cytoplasmic segment spans residues 138–154 (RHQLIINPRGWRPSNRH). Residues 155 to 175 (AYVGIAVIWVLAVASSLPFLI) traverse the membrane as a helical segment. Residues 176 to 211 (YQVLTDEPFQNVTLDAFKDKYVCFDKFLSDSHRLSY) lie on the Extracellular side of the membrane. The chain crosses the membrane as a helical span at residues 212-232 (TTLLLVLQYFGPLCFIFICYF). Residues 233-260 (KIYIRLKRRNNMMDKMRDNKYRSSETKR) lie on the Cytoplasmic side of the membrane. Residues 261 to 281 (INVMLLSIVVAFAVCWLPLTI) traverse the membrane as a helical segment. Residues 282–299 (FNTVFDWNHQIIATCNHN) lie on the Extracellular side of the membrane. Residues 300–320 (LLFLLCHLTAMISTCINPIFY) form a helical membrane-spanning segment. Residues 321–383 (GFLNKNFQRD…KIHSDDNEKI (63 aa)) are Cytoplasmic-facing. Residue Cys-338 is the site of S-palmitoyl cysteine attachment. The residue at position 368 (Ser-368) is a Phosphoserine.

It belongs to the G-protein coupled receptor 1 family.

The protein resides in the cell membrane. Receptor for neuropeptide Y and peptide YY. The protein is Neuropeptide Y receptor type 1 (NPY1R) of Sus scrofa (Pig).